Reading from the N-terminus, the 1029-residue chain is Exportin-T (1029 aa).

It belongs to the exportin family.

The protein resides in the nucleus. Its subcellular location is the cytoplasm. In terms of biological role, tRNA nucleus export receptor which facilitates tRNA translocation across the nuclear pore complex. Involved in pre-tRNA splicing, probably by affecting the interaction of pre-tRNA with splicing endonuclease. In Aspergillus clavatus (strain ATCC 1007 / CBS 513.65 / DSM 816 / NCTC 3887 / NRRL 1 / QM 1276 / 107), this protein is Exportin-T (los1).